Reading from the N-terminus, the 350-residue chain is 3'-hydroxy-N-methyl-(S)-coclaurine 4'-O-methyltransferase (350 aa).

Positions 196, 219, 239, 240, and 253 each coordinate S-adenosyl-L-methionine. Catalysis depends on H257, which acts as the Proton acceptor.

Belongs to the class I-like SAM-binding methyltransferase superfamily. Cation-independent O-methyltransferase family. COMT subfamily. Homodimer.

The catalysed reaction is (S)-3'-hydroxy-N-methylcoclaurine + S-adenosyl-L-methionine = (S)-reticuline + S-adenosyl-L-homocysteine + H(+). The protein operates within alkaloid biosynthesis; (S)-reticuline biosynthesis; (S)-reticuline from (S)-norcoclaurine: step 4/4. In terms of biological role, catalyzes the transfer of the methyl group to the 4'-hydroxyl group of 3'-hydroxy-N-methylcoclaurine to form reticuline. The chain is 3'-hydroxy-N-methyl-(S)-coclaurine 4'-O-methyltransferase from Coptis japonica (Japanese goldthread).